Consider the following 122-residue polypeptide: Phospholipase A2 crotoxin basic subunit CBb (122 aa).

7 disulfides stabilise this stretch: C26–C115, C28–C44, C43–C95, C49–C122, C50–C88, C57–C81, and C75–C86. Positions 27, 29, and 31 each coordinate Ca(2+). The active site involves H47. D48 is a binding site for Ca(2+). Residue D89 is part of the active site.

It belongs to the phospholipase A2 family. Group II subfamily. D49 sub-subfamily. Heterodimer of one of the acidic (CA1, CA2, CA3 or CA4) and one of the basic (CBa1, CBa2, CBb, CBc or CBd) subunits; non-covalently linked. The acidic subunit is non-toxic, without enzymatic activity and comprises 3 peptides that are cross-linked by 5 disulfide bridges. The basic subunit is toxic, has phospholipase A2 activity and is composed of a single chain. Multiple variants of each subunit give different crotoxin complexes that can be subdivided into 2 classes: (1) those of high toxicity, low PLA2 activity (CBb, CBc and CBd linked with high affinity to any CA) and high stability (K(d)=4.5 nM) and (2) those of moderate toxicity, high PLA2 activity (CBa2 linked with low affinity to any CA) and low stability (K(d)=25 nM). The cofactor is Ca(2+). Expressed by the venom gland.

It localises to the secreted. It catalyses the reaction a 1,2-diacyl-sn-glycero-3-phosphocholine + H2O = a 1-acyl-sn-glycero-3-phosphocholine + a fatty acid + H(+). In terms of biological role, heterodimer CA-CB: Crotoxin is a potent presynaptic neurotoxin that possesses phospholipase A2 (PLA2) activity and exerts a lethal action by blocking neuromuscular transmission. It consists of a non-covalent association of a basic and weakly toxic PLA2 subunit (CBa2, CBb, CBc, or CBd), with a small acidic, non-enzymatic and non-toxic subunit (CA1, CA2, CA3 or CA4). The complex acts by binding to a specific 48-kDa protein (R48) receptor located on presynaptic membranes, forming a transient ternary complex CA-CB-R48, followed by dissociation of the CA-CB complex and release of the CA subunit. At equilibrium, only the CB subunits remain associated with the specific crotoxin receptor. In addition to neurotoxicity, crotoxin has been found to exert myotoxicity, nephrotoxicity, and cardiovascular toxicity. Moreover, anti-inflammatory, immunomodulatory, anti-tumor and analgesic effects of crotoxin have also been reported. Monomer CBb: The basic subunit of crotoxin is a snake venom phospholipase A2 (PLA2) that exhibits weak neurotoxicity (10-fold less than the heterodimer) and strong anticoagulant effects by binding to factor Xa (F10) and inhibiting the prothrombinase activity. In addition, it shows the same effects described for the heterodimer and binds the nucleotide-binding domain (NBD1) of CFTR chloride channels and increases the channel current. PLA2 catalyzes the calcium-dependent hydrolysis of the 2-acyl groups in 3-sn-phosphoglycerides. This Crotalus durissus terrificus (South American rattlesnake) protein is Phospholipase A2 crotoxin basic subunit CBb.